Here is a 630-residue protein sequence, read N- to C-terminus: Long-chain-fatty-acid--AMP ligase FadD32 (630 aa).

ATP contacts are provided by residues 187 to 192 (TSGSTR), serine 342, alanine 346, aspartate 469, and arginine 483.

The protein belongs to the ATP-dependent AMP-binding enzyme family. As to quaternary structure, monomer.

It catalyses the reaction a long-chain fatty acid + holo-[ACP] + ATP = a long-chain fatty acyl-[ACP] + AMP + diphosphate. The enzyme catalyses decanoate + ATP + H(+) = decanoyl-AMP + diphosphate. The catalysed reaction is dodecanoate + ATP + H(+) = dodecanoyl-AMP + diphosphate. It carries out the reaction tetradecanoate + ATP + H(+) = tetradecanoyl-AMP + diphosphate. Its pathway is lipid metabolism; mycolic acid biosynthesis. The acyl-AMP ligase activity is inhibited by the alkylphosphate ester of AMP, adenosine 50-dodecylphosphate (AMPC12). Also inhibited by eicosyl-AMP (AMPC20). Involved in the biosynthesis of mycolic acids. Catalyzes the activation of long-chain fatty acids as acyl-adenylates (acyl-AMP), which are then transferred to the phosphopantetheine arm of the polyketide synthase Pks13 for further chain extension. Can use decanoate (C10), dodecanoate (C12) and tetradecanoate (C14). In Mycolicibacterium smegmatis (strain ATCC 700084 / mc(2)155) (Mycobacterium smegmatis), this protein is Long-chain-fatty-acid--AMP ligase FadD32.